Reading from the N-terminus, the 486-residue chain is UDP-N-acetylglucosamine pyrophosphorylase (486 aa).

The Substrate binding motif lies at 109–112 (MAGG). UTP is bound by residues 109–112 (MAGG), lysine 123, glutamine 199, and glycine 226. Asparagine 227 contacts substrate. Aspartate 257 is a binding site for UTP. A Substrate binding motif is present at residues 309–310 (EY). Residue lysine 389 coordinates UTP. Substrate is bound at residue lysine 421.

The protein belongs to the UDPGP type 1 family.

It localises to the cytoplasm. It catalyses the reaction N-acetyl-alpha-D-glucosamine 1-phosphate + UTP + H(+) = UDP-N-acetyl-alpha-D-glucosamine + diphosphate. Its pathway is nucleotide-sugar biosynthesis; UDP-N-acetyl-alpha-D-glucosamine biosynthesis; UDP-N-acetyl-alpha-D-glucosamine from N-acetyl-alpha-D-glucosamine 1-phosphate: step 1/1. In Candida albicans (Yeast), this protein is UDP-N-acetylglucosamine pyrophosphorylase (UAP1).